We begin with the raw amino-acid sequence, 136 residues long: Large ribosomal subunit protein uL16 (136 aa).

It belongs to the universal ribosomal protein uL16 family. As to quaternary structure, part of the 50S ribosomal subunit.

Its function is as follows. Binds 23S rRNA and is also seen to make contacts with the A and possibly P site tRNAs. This is Large ribosomal subunit protein uL16 from Hamiltonella defensa subsp. Acyrthosiphon pisum (strain 5AT).